Here is a 200-residue protein sequence, read N- to C-terminus: UPF0316 protein SAUSA300_1892 (200 aa).

A run of 3 helical transmembrane segments spans residues 8-28 (PWLM…FLTM), 40-60 (IAAS…GLVM), and 66-86 (IQNI…GMKI).

This sequence belongs to the UPF0316 family.

The protein resides in the cell membrane. The polypeptide is UPF0316 protein SAUSA300_1892 (Staphylococcus aureus (strain USA300)).